We begin with the raw amino-acid sequence, 262 residues long: Hydroxyethylthiazole kinase (262 aa).

Residue M50 coordinates substrate. ATP is bound by residues R125 and T171. Position 198 (G198) interacts with substrate.

It belongs to the Thz kinase family. The cofactor is Mg(2+).

It catalyses the reaction 5-(2-hydroxyethyl)-4-methylthiazole + ATP = 4-methyl-5-(2-phosphooxyethyl)-thiazole + ADP + H(+). It participates in cofactor biosynthesis; thiamine diphosphate biosynthesis; 4-methyl-5-(2-phosphoethyl)-thiazole from 5-(2-hydroxyethyl)-4-methylthiazole: step 1/1. Its function is as follows. Catalyzes the phosphorylation of the hydroxyl group of 4-methyl-5-beta-hydroxyethylthiazole (THZ). The polypeptide is Hydroxyethylthiazole kinase (Escherichia fergusonii (strain ATCC 35469 / DSM 13698 / CCUG 18766 / IAM 14443 / JCM 21226 / LMG 7866 / NBRC 102419 / NCTC 12128 / CDC 0568-73)).